Reading from the N-terminus, the 858-residue chain is Beta-galactosidase 6 (858 aa).

An N-terminal signal peptide occupies residues 1 to 30 (MAAATVGVLLRLLLLPVVVVVSLLVGASRA). Asparagine 32 is a glycosylation site (N-linked (GlcNAc...) asparagine). Glutamate 189 acts as the Proton donor in catalysis. Catalysis depends on glutamate 258, which acts as the Nucleophile. N-linked (GlcNAc...) asparagine glycans are attached at residues asparagine 259, asparagine 482, asparagine 507, asparagine 595, and asparagine 830. Residues 772-858 (QTQGPALRLE…KSLVVEAACS (87 aa)) form the SUEL-type lectin domain.

The protein belongs to the glycosyl hydrolase 35 family.

Its subcellular location is the secreted. The protein resides in the extracellular space. It localises to the apoplast. It catalyses the reaction Hydrolysis of terminal non-reducing beta-D-galactose residues in beta-D-galactosides.. Its function is as follows. Releases galactose by hydrolysis of plant cell wall galactose-containing polysaccharides such as galacto-xyloglucan, pectic galactan and galactan (in vitro). This chain is Beta-galactosidase 6, found in Oryza sativa subsp. japonica (Rice).